The following is a 338-amino-acid chain: MNNSTTTDPPNQPCSWNTLITKQIIPVLYGMVFITGLLLNGISGWIFFYVPSSKSFIIYLKNIVVADFLMGLTFPFKVLGDSGLGPWQVNVFVCRVSAVIFYVNMYVSIVFFGLISFDRYYKIVKPLLTSIVQSVNYSKLLSVLVWMLMLLLAVPNIILTNQGVKEVTKIQCMELKNELGRKWHKASNYIFVSIFWVVFLLLIVFYTAITRKIFKSHLKSRKNSTSVKRKSSRNIFSIVLVFVVCFVPYHIARIPYTKSQTEGHYSCRTKETLLYAKEFTLLLSAANVCLDPIIYFFLCQPFREVLNKKLHMSLKVQNDLEVSKTKRENAIHESTDTL.

The Extracellular portion of the chain corresponds to Met1–Tyr29. 2 N-linked (GlcNAc...) asparagine glycosylation sites follow: Asn2 and Asn3. The chain crosses the membrane as a helical span at residues Gly30–Val50. The Cytoplasmic segment spans residues Pro51–Ser55. The chain crosses the membrane as a helical span at residues Phe56–Phe76. At Lys77–Val96 the chain is on the extracellular side. Cys94 and Cys172 are disulfide-bonded. Residues Ser97–Phe117 form a helical membrane-spanning segment. Residues Asp118–Lys139 lie on the Cytoplasmic side of the membrane. The helical transmembrane segment at Leu140–Thr160 threads the bilayer. Topologically, residues Asn161–Asn188 are extracellular. A helical membrane pass occupies residues Tyr189–Ile209. The Cytoplasmic portion of the chain corresponds to Thr210 to Asn234. A helical membrane pass occupies residues Ile235 to Pro255. Residues Tyr256–Glu278 are Extracellular-facing. A helical membrane pass occupies residues Phe279 to Cys299. Residues Gln300–Leu338 are Cytoplasmic-facing.

The protein belongs to the G-protein coupled receptor 1 family.

The protein resides in the cell membrane. In terms of biological role, receptor for UDP-glucose coupled to G-proteins. The chain is P2Y purinoceptor 14 (P2ry14) from Mus musculus (Mouse).